A 244-amino-acid chain; its full sequence is Lymphotoxin-beta (244 aa).

Residues 1–18 (MGALGLEGRGGRLQGRGS) are Cytoplasmic-facing. Residues 19–48 (LLLAVAGATSLVTLLLAVPITVLAVLALVP) traverse the membrane as a helical; Signal-anchor for type II membrane protein segment. At 49–244 (QDQGGLVTDT…KTFFGAVMVG (196 aa)) the chain is on the extracellular side. A THD domain is found at 88–243 (PAAHLIGAPL…GKTFFGAVMV (156 aa)). N-linked (GlcNAc...) asparagine glycosylation occurs at Asn-222.

The protein belongs to the tumor necrosis factor family. Heterotrimer of either two LTB and one LTA subunits or (less prevalent) two LTA and one LTB subunits.

The protein localises to the membrane. Functionally, cytokine that binds to LTBR/TNFRSF3. May play a specific role in immune response regulation. Provides the membrane anchor for the attachment of the heterotrimeric complex to the cell surface. In Macaca mulatta (Rhesus macaque), this protein is Lymphotoxin-beta (LTB).